Here is a 272-residue protein sequence, read N- to C-terminus: ATP synthase subunit a (272 aa).

Transmembrane regions (helical) follow at residues 41-61, 101-121, 143-165, 221-241, and 243-263; these read VLNI…LLIF, LIAP…LMDL, VPSA…ILYY, LIFI…LNVP, and AIFH…LTIV.

It belongs to the ATPase A chain family. F-type ATPases have 2 components, CF(1) - the catalytic core - and CF(0) - the membrane proton channel. CF(1) has five subunits: alpha(3), beta(3), gamma(1), delta(1), epsilon(1). CF(0) has three main subunits: a(1), b(2) and c(9-12). The alpha and beta chains form an alternating ring which encloses part of the gamma chain. CF(1) is attached to CF(0) by a central stalk formed by the gamma and epsilon chains, while a peripheral stalk is formed by the delta and b chains.

Its subcellular location is the cell inner membrane. Key component of the proton channel; it plays a direct role in the translocation of protons across the membrane. This Sodalis glossinidius (strain morsitans) protein is ATP synthase subunit a.